A 272-amino-acid polypeptide reads, in one-letter code: HMP-PP phosphatase (272 aa).

Asp-8 (nucleophile) is an active-site residue. Mg(2+) is bound by residues Asp-8, Asp-10, and Asp-212.

Belongs to the HAD-like hydrolase superfamily. Cof family. Mg(2+) is required as a cofactor.

It catalyses the reaction 4-amino-2-methyl-5-(diphosphooxymethyl)pyrimidine + H2O = 4-amino-2-methyl-5-(phosphooxymethyl)pyrimidine + phosphate + H(+). Catalyzes the hydrolysis of 4-amino-2-methyl-5-hydroxymethylpyrimidine pyrophosphate (HMP-PP) to 4-amino-2-methyl-5-hydroxymethylpyrimidine phosphate (HMP-P). The chain is HMP-PP phosphatase from Salmonella agona (strain SL483).